A 137-amino-acid chain; its full sequence is MLQPKRTKYRKQFKGRIKGVAKGGFDLAFGEFGLKSQEPNRVNAREIEAARRAITRYMKRAGRVWIRVFPDVPVTAKPTEVRMGKGKGSVEYWACKVKPGRMMFEIDGVTEEIAREALRLGAAKLSVKTRFVQRIAE.

Belongs to the universal ribosomal protein uL16 family. In terms of assembly, part of the 50S ribosomal subunit.

Its function is as follows. Binds 23S rRNA and is also seen to make contacts with the A and possibly P site tRNAs. This is Large ribosomal subunit protein uL16 from Agrobacterium fabrum (strain C58 / ATCC 33970) (Agrobacterium tumefaciens (strain C58)).